A 625-amino-acid chain; its full sequence is Glutamyl-tRNA(Gln) amidotransferase subunit E (625 aa).

Belongs to the GatB/GatE family. GatE subfamily. Heterodimer of GatD and GatE.

It carries out the reaction L-glutamyl-tRNA(Gln) + L-glutamine + ATP + H2O = L-glutaminyl-tRNA(Gln) + L-glutamate + ADP + phosphate + H(+). Allows the formation of correctly charged Gln-tRNA(Gln) through the transamidation of misacylated Glu-tRNA(Gln) in organisms which lack glutaminyl-tRNA synthetase. The reaction takes place in the presence of glutamine and ATP through an activated gamma-phospho-Glu-tRNA(Gln). The GatDE system is specific for glutamate and does not act on aspartate. The chain is Glutamyl-tRNA(Gln) amidotransferase subunit E from Caldivirga maquilingensis (strain ATCC 700844 / DSM 13496 / JCM 10307 / IC-167).